Here is a 1201-residue protein sequence, read N- to C-terminus: Potassium/sodium hyperpolarization-activated cyclic nucleotide-gated channel 4 (1201 aa).

Over 1–263 the chain is Cytoplasmic; that stretch reads MDKLPPSMRK…IIHPYSDFRF (263 aa). Residues 24 to 183 form a disordered region; sequence WIMDEEEDGE…PASASCEQPS (160 aa). The segment covering 26 to 36 has biased composition (acidic residues); that stretch reads MDEEEDGEEEG. Positions 105–118 are enriched in gly residues; the sequence is SRGGGSGGAGGGSS. Basic and acidic residues predominate over residues 121-132; it reads HLHDSAEERRLI. The residue at position 139 (Ser139) is a Phosphoserine. Pro residues predominate over residues 164 to 174; the sequence is ASPPPQQPPQP. The segment at 209 to 260 is involved in subunit assembly; the sequence is GQSGFMQRQFGAMLQPGVNKFSLRMFGSQKAVEREQERVKSAGFWIIHPYSD. The helical transmembrane segment at 264-286 threads the bilayer; that stretch reads YWDLTMLLLMVGNLIIIPVGITF. At 287 to 293 the chain is on the extracellular side; that stretch reads FKDENTT. The helical transmembrane segment at 294-314 threads the bilayer; that stretch reads PWIVFNVVSDTFFLIDLVLNF. At 315–336 the chain is on the cytoplasmic side; it reads RTGIVVEDNTEIILDPQRIKMK. A helical transmembrane segment spans residues 337–359; sequence YLKSWFVVDFISSIPVDYIFLIV. Residues 360–378 are Extracellular-facing; the sequence is ETRIDSEVYKTARALRIVR. Residues 379–399 traverse the membrane as a helical; Voltage-sensor segment; the sequence is FTKILSLLRLLRLSRLIRYIH. Topologically, residues 400–413 are cytoplasmic; it reads QWEEIFHMTYDLAS. The helical transmembrane segment at 414–436 threads the bilayer; it reads AVVRIVNLIGMMLLLCHWDGCLQ. At 437-464 the chain is on the extracellular side; sequence FLVPMLQDFPHDCWVSINGMVNNSWGKQ. An N-linked (GlcNAc...) asparagine glycan is attached at Asn458. Positions 465–486 form an intramembrane region, pore-forming; sequence YSYALFKAMSHMLCIGYGRQAP. The Extracellular portion of the chain corresponds to 487-491; that stretch reads VGMSD. Residues 492 to 517 form a helical membrane-spanning segment; sequence VWLTMLSMIVGATCYAMFIGHATALI. At 518-1201 the chain is on the cytoplasmic side; sequence QSLDSSRRQY…PVRSKLPSNL (684 aa). Positions 559, 562, 564, and 566 each coordinate 3',5'-cyclic GMP. 3',5'-cyclic AMP-binding residues include Gly659, Glu660, Cys662, Arg669, Thr670, Val673, and Arg710. 2 disordered regions span residues 804–902 and 914–1201; these read AIFR…TAAA and ALGG…PSNL. Composition is skewed to low complexity over residues 831–856 and 866–880; these read SLIPSALGSASPASSPSQVDTPSSSS and SAPPGLSPLLPSSSS. Pro residues predominate over residues 881-894; that stretch reads SPPPGACGSPPAPT. Low complexity-rich tracts occupy residues 915 to 939 and 967 to 995; these read LGGSLSSSDSPLLTPLQPGARSPQA and RSPSSSPGQLGQPPGELSLGLAAGPSSTP. Residues 1029 to 1042 show a composition bias toward pro residues; that stretch reads GHSPGPPRTFPSAP. Positions 1045 to 1056 are enriched in low complexity; that stretch reads ASGSHGSLLLPP. Phosphoserine occurs at positions 1105 and 1108. Positions 1122-1134 are enriched in gly residues; the sequence is AGGGSGSSGGLGP.

Belongs to the potassium channel HCN family. In terms of assembly, homotetramer. The potassium channel is composed of a homo- or heterotetrameric complex of pore-forming subunits. Interacts with PEX5L with a 4:4 HCN4:PEX5L stoichiometry; reduces the effects of cAMP on the voltage-dependence and rate of activation. Interacts with IRAG1; regulates HCN4 channel activity. Interacts with IRAG2; regulates HCN4 channel activity. S-palmitoylated. Detected in a subset of elongated cells in taste buds.

Its subcellular location is the cell membrane. It carries out the reaction K(+)(in) = K(+)(out). The enzyme catalyses Na(+)(in) = Na(+)(out). With respect to regulation, activated by cAMP, and to a lesser extent by cGMP and cCMP. cAMP binding causes a conformation change that leads to the assembly of an active tetramer and channel opening. Binding of cAMP removes a tonic inhibition conferred by cyclic nucleotide-binding domain (CNBD) on channel opening. Cyclic dinucleotides can modulate HCN4 channel; cyclic dinucleotides acting as potent antagonists of cAMP. Inhibited by extracellular Cs(+) ions. Auxiliary subunits can also regulate HCN4 channel. IRAG1 causes a gain-of-function by shifting HCN4 activation to more depolarized membrane potentials in the absence of cAMP. In contrast, IRAG2 causes a loss-of-function by inhibiting cAMP-dependent potentiation of HCN4 activation. Hyperpolarization-activated ion channel that are permeable to Na(+) and K(+) ions with very slow activation and inactivation. Exhibits higher selectivity for K(+) over Na(+) ions. Contributes to the native pacemaker currents in heart (If) that regulate the rhythm of heart beat. Contributes to the native pacemaker currents in neurons (Ih). May mediate responses to sour stimuli. The sequence is that of Potassium/sodium hyperpolarization-activated cyclic nucleotide-gated channel 4 (Hcn4) from Mus musculus (Mouse).